Reading from the N-terminus, the 206-residue chain is MELNVINTQGKAVGSLQVSDALFGREYNEALVHQVVTAFLANARSGNRAQLTRAEVKHSTKKPFRQKGTGNARAGMTSTPNRRGGGRAFPNKPDENFTQKVNRKMYRAGIATILSQLVRDERLIVVDDLSVASPKTKEFVGAVQPMGLEQALFITNELSENLYLSSRNLPNMLVIEAVQADPYSLLRFKKTVITRDAVKQLEEQWA.

Residues 51 to 96 (LTRAEVKHSTKKPFRQKGTGNARAGMTSTPNRRGGGRAFPNKPDEN) are disordered.

Belongs to the universal ribosomal protein uL4 family. In terms of assembly, part of the 50S ribosomal subunit.

Its function is as follows. One of the primary rRNA binding proteins, this protein initially binds near the 5'-end of the 23S rRNA. It is important during the early stages of 50S assembly. It makes multiple contacts with different domains of the 23S rRNA in the assembled 50S subunit and ribosome. Forms part of the polypeptide exit tunnel. This chain is Large ribosomal subunit protein uL4, found in Chromobacterium violaceum (strain ATCC 12472 / DSM 30191 / JCM 1249 / CCUG 213 / NBRC 12614 / NCIMB 9131 / NCTC 9757 / MK).